We begin with the raw amino-acid sequence, 148 residues long: Urease accessory protein UreE (148 aa).

It belongs to the UreE family.

Its subcellular location is the cytoplasm. Involved in urease metallocenter assembly. Binds nickel. Probably functions as a nickel donor during metallocenter assembly. The chain is Urease accessory protein UreE from Lysinibacillus sphaericus (strain C3-41).